Consider the following 146-residue polypeptide: Anti-sigma F factor (146 aa).

Belongs to the anti-sigma-factor family.

The catalysed reaction is L-seryl-[protein] + ATP = O-phospho-L-seryl-[protein] + ADP + H(+). It carries out the reaction L-threonyl-[protein] + ATP = O-phospho-L-threonyl-[protein] + ADP + H(+). Binds to sigma F and blocks its ability to form an RNA polymerase holoenzyme (E-sigma F). Phosphorylates SpoIIAA on a serine residue. This phosphorylation may enable SpoIIAA to act as an anti-anti-sigma factor that counteracts SpoIIAB and thus releases sigma F from inhibition. The polypeptide is Anti-sigma F factor (Lysinibacillus sphaericus (Bacillus sphaericus)).